We begin with the raw amino-acid sequence, 363 residues long: Zinc finger protein 830 (363 aa).

An N-acetylalanine modification is found at Ala-2. Residues 16–40 (VNQEELRRLMREKQRLSTNRKRIES) adopt a coiled-coil conformation. The C2H2-type zinc finger occupies 53 to 75 (CALCNTPVKSELLWQTHVLGKQH). A disordered region spans residues 81–213 (ELKGAKGATQ…NPPKAPLVPH (133 aa)). Polar residues predominate over residues 90–99 (QGPSTGTVPQ). Residues 104–115 (RATDVESQDAKK) show a composition bias toward basic and acidic residues. Residues 129-143 (SASSANLDAARAAPS) show a composition bias toward low complexity. The span at 152–164 (DYDDEEEEEEEGG) shows a compositional bias: acidic residues. A compositionally biased stretch (basic and acidic residues) spans 165–184 (GEERRDSSKHLPDAQGKEHS). Residues 189–205 (RETTSNVLPNDPFNTNP) are compositionally biased toward polar residues. Ser-216 carries the post-translational modification Phosphoserine. The stretch at 303–331 (IECYRRVEKLRNRQDEIKNKLKEVLTIKE) forms a coiled coil. Ser-342 and Ser-353 each carry phosphoserine.

As to quaternary structure, component of the XAB2 complex, a multimeric protein complex composed of XAB2, PRPF19, AQR, ZNF830, ISY1, and PPIE; this complex binds preferentially to RNA. Interacts with XAB2. Identified in a pentameric intron-binding (IB) complex composed of AQR, XAB2, ISY1, ZNF830 and PPIE that is incorporated into the spliceosome as a preassembled complex. The IB complex does not contain PRPF19. Phosphorylated in response to DNA damage by the cell cycle checkpoint kinases ATR/ATM. In terms of tissue distribution, widely expressed at low level. Expressed in oocytes from primordial to antral follicles. Also detected in somatic cells of the ovary, namely, in granulosa cells from the pre-antral follicle stage onward.

It localises to the nucleus. Its subcellular location is the chromosome. It is found in the nucleus speckle. Functionally, may play a role in pre-mRNA splicing as component of the spliceosome. Acts as an important regulator of the cell cycle that participates in the maintenance of genome integrity. During cell cycle progression in embryonic fibroblast, prevents replication fork collapse, double-strand break formation and cell cycle checkpoint activation. Controls mitotic cell cycle progression and cell survival in rapidly proliferating intestinal epithelium and embryonic stem cells. During the embryo preimplantation, controls different aspects of M phase. During early oocyte growth, plays a role in oocyte survival by preventing chromosomal breaks formation, activation of TP63 and reduction of transcription. The protein is Zinc finger protein 830 of Mus musculus (Mouse).